The primary structure comprises 358 residues: Peptide chain release factor 1 (358 aa).

Q233 carries the post-translational modification N5-methylglutamine.

It belongs to the prokaryotic/mitochondrial release factor family. In terms of processing, methylated by PrmC. Methylation increases the termination efficiency of RF1.

The protein localises to the cytoplasm. Its function is as follows. Peptide chain release factor 1 directs the termination of translation in response to the peptide chain termination codons UAG and UAA. This chain is Peptide chain release factor 1, found in Geobacillus kaustophilus (strain HTA426).